A 201-amino-acid polypeptide reads, in one-letter code: Ribonuclease HII (201 aa).

Residues 10-200 (LIEAGCDEAG…LGTDPQLEIP (191 aa)) form the RNase H type-2 domain. A divalent metal cation-binding residues include D16, E17, and D108.

Belongs to the RNase HII family. Mn(2+) serves as cofactor. It depends on Mg(2+) as a cofactor.

It is found in the cytoplasm. The catalysed reaction is Endonucleolytic cleavage to 5'-phosphomonoester.. In terms of biological role, endonuclease that specifically degrades the RNA of RNA-DNA hybrids. The protein is Ribonuclease HII of Phocaeicola vulgatus (strain ATCC 8482 / DSM 1447 / JCM 5826 / CCUG 4940 / NBRC 14291 / NCTC 11154) (Bacteroides vulgatus).